Reading from the N-terminus, the 176-residue chain is Zinc finger A20 and AN1 domain-containing stress-associated protein 9 (176 aa).

The segment at alanine 16–alanine 50 adopts an A20-type zinc-finger fold. Residues cysteine 22, cysteine 26, cysteine 38, cysteine 41, cysteine 117, cysteine 120, cysteine 131, cysteine 133, cysteine 138, histidine 141, histidine 147, and cysteine 149 each contribute to the Zn(2+) site. The AN1-type zinc-finger motif lies at proline 111 to glycine 157.

Its function is as follows. May be involved in environmental stress response. This Arabidopsis thaliana (Mouse-ear cress) protein is Zinc finger A20 and AN1 domain-containing stress-associated protein 9 (SAP9).